The chain runs to 807 residues: Spondin-1 (807 aa).

The signal sequence occupies residues 1-28 (MRLSPAPLRLSRGPALLALALPLAAALA). One can recognise a Reelin domain in the interval 29–194 (FSDETLDKVA…DPTLDGVTDR (166 aa)). Disulfide bonds link Cys44/Cys128, Cys156/Cys182, Cys199/Cys336, Cys200/Cys340, Cys202/Cys415, Cys443/Cys480, Cys454/Cys489, Cys459/Cys494, Cys502/Cys538, Cys513/Cys517, Cys548/Cys554, Cys559/Cys595, Cys570/Cys574, Cys605/Cys610, Cys615/Cys650, Cys626/Cys630, and Cys660/Cys665. The Spondin domain occupies 195–388 (PILDCCACGT…LTSLDHPQSP (194 aa)). Asn214 is a glycosylation site (N-linked (GlcNAc...) asparagine). Ca(2+) contacts are provided by Asp325, Asp354, and Asp358. 5 consecutive TSP type-1 domains span residues 442–495 (TCIY…PGCS), 501–555 (TCTM…EECS), 558–611 (SCLV…PECH), 614–666 (PCLL…PECP), and 668–721 (DCEL…RKCL). An N-linked (GlcNAc...) asparagine glycan is attached at Asn681. Basic and acidic residues predominate over residues 732–746 (REARESRRSEQLREE). Positions 732–752 (REARESRRSEQLREESDGEQF) are disordered. One can recognise a TSP type-1 6 domain in the interval 754–806 (GCRMRPWTAWSECTKLCGGGIQERYMTVKKRFKSSQFTSCKDKKEIRACNVHP).

Binds to the central extracellular domain of APP and inhibits beta-secretase cleavage of APP. In terms of tissue distribution, expressed at high levels in the floor plate.

It localises to the secreted. Its subcellular location is the extracellular space. It is found in the extracellular matrix. Functionally, cell adhesion protein that promotes the attachment of spinal cord and sensory neuron cells and the outgrowth of neurites in vitro. May contribute to the growth and guidance of axons in both the spinal cord and the PNS. The polypeptide is Spondin-1 (Spon1) (Rattus norvegicus (Rat)).